A 197-amino-acid chain; its full sequence is Probable nicotinate-nucleotide adenylyltransferase (197 aa).

The protein belongs to the NadD family.

The catalysed reaction is nicotinate beta-D-ribonucleotide + ATP + H(+) = deamido-NAD(+) + diphosphate. Its pathway is cofactor biosynthesis; NAD(+) biosynthesis; deamido-NAD(+) from nicotinate D-ribonucleotide: step 1/1. Catalyzes the reversible adenylation of nicotinate mononucleotide (NaMN) to nicotinic acid adenine dinucleotide (NaAD). The polypeptide is Probable nicotinate-nucleotide adenylyltransferase (Bordetella pertussis (strain Tohama I / ATCC BAA-589 / NCTC 13251)).